Consider the following 1191-residue polypeptide: Rho GTPase-activating protein 20 (1191 aa).

Polar residues predominate over residues methionine 1–glycine 23. The disordered stretch occupies residues methionine 1–arginine 45. The residue at position 46 (serine 46) is a Phosphoserine. The region spanning serine 78 to leucine 180 is the PH domain. The 102-residue stretch at lysine 194 to leucine 295 folds into the Ras-associating domain. The region spanning isoleucine 365–phenylalanine 551 is the Rho-GAP domain. 2 positions are modified to phosphoserine: serine 704 and serine 730. 4 disordered regions span residues serine 768 to lysine 791, arginine 926 to alanine 1014, lysine 1052 to serine 1123, and histidine 1140 to isoleucine 1191. Over residues serine 934–serine 961 the composition is skewed to low complexity. 2 stretches are compositionally biased toward polar residues: residues glutamate 962 to alanine 981 and proline 1103 to glutamine 1116. Residues isoleucine 1182–isoleucine 1191 are compositionally biased toward basic and acidic residues.

Expressed predominantly in the brain. Lower expression is found in lymph nodes.

Its function is as follows. GTPase activator for the Rho-type GTPases by converting them to an inactive GDP-bound state. The polypeptide is Rho GTPase-activating protein 20 (ARHGAP20) (Homo sapiens (Human)).